Consider the following 839-residue polypeptide: Autophagy-related protein 9A (839 aa).

The segment at 1–20 (MAQFDTEYQRLEASYSDSPP) is disordered. Alanine 2 is modified (N-acetylalanine). Residues 2–61 (AQFDTEYQRLEASYSDSPPGEEDLLVHVAEGSKSPWHHIENLDLFFSRVYNLHQKNGFTC) lie on the Cytoplasmic side of the membrane. Residues 8–11 (YQRL) carry the Tyrosine-based sorting signal motif. Serine 14, serine 16, and serine 18 each carry phosphoserine. Residues 62-84 (MLIGEIFELMQFLFVVAFTTFLV) traverse the membrane as a helical segment. Topologically, residues 85-128 (SCVDYDILFANKMVNHSLHPTEPVKVTLPDAFLPAQVCSARIQE) are lumenal. Asparagine 99 is a glycosylation site (N-linked (GlcNAc...) asparagine). Residues 129–154 (NGSLITILVIAGVFWIHRLIKFIYNI) form a helical membrane-spanning segment. The Cytoplasmic portion of the chain corresponds to 155-290 (CCYWEIHSFY…ELAQRLSNRI (136 aa)). An intramembrane segment occupies 291–301 (LWIGIANFLLC). Residues 302 to 319 (PLILIWQILYAFFSYAEV) are Cytoplasmic-facing. The stretch at 320 to 328 (LKREPGALG) is an intramembrane region. The Cytoplasmic segment spans residues 329 to 371 (ARCWSLYGRCYLRHFNELEHELQSRLNRGYKPASKYMNCFLSP). The helical transmembrane segment at 372–397 (LLTLLAKNGAFFAGSILAVLIALTIY) threads the bilayer. Over 398-406 (DEDVLAVEH) the chain is Lumenal. The helical transmembrane segment at 407–424 (VLTTVTLLGVTVTVCRSF) threads the bilayer. Over 425 to 470 (IPDQHMVFCPEQLLRVILAHIHYMPDHWQGNAHRSQTRDEFAQLFQ) the chain is Cytoplasmic. The stretch at 471 to 480 (YKAVFILEEL) is an intramembrane region. Residues 481–483 (LSP) are Cytoplasmic-facing. Residues 484–492 (IVTPLILIF) lie within the membrane without spanning it. Residues 493-839 (CLRPRALEII…DELPPQVHKV (347 aa)) lie on the Cytoplasmic side of the membrane. Phosphoserine is present on residues serine 656, serine 735, serine 738, serine 741, and serine 828. Disordered stretches follow at residues 656–686 (SPLQ…SSGS) and 717–839 (HKQQ…VHKV). Basic and acidic residues predominate over residues 724–736 (EPERHVWHRRESD). 2 stretches are compositionally biased toward acidic residues: residues 737 to 747 (ESGESAPDEGG) and 823 to 832 (VPEEGSEDEL).

The protein belongs to the ATG9 family. In terms of assembly, homotrimer; forms a homotrimer with a central pore that forms a path between the two membrane leaflets. Interacts (via cytoplasmic its C-terminus) with ATG2A. Interacts with SUPT20H. Interacts (via the tyrosine-based sorting signal motif) with AP4M1; promoting association with the AP-4 complex. Interacts with ARFIP1 and ARFIP2. Interacts with PI4K2A and PI4KB. Interacts with ATG4A; the interaction is direct and promotes ATG9A trafficking. Ufmylated in a DDRGK1 dependent manner.

The protein resides in the preautophagosomal structure membrane. Its subcellular location is the cytoplasmic vesicle. The protein localises to the autophagosome membrane. It localises to the golgi apparatus. It is found in the trans-Golgi network membrane. The protein resides in the late endosome membrane. Its subcellular location is the recycling endosome membrane. The protein localises to the endoplasmic reticulum membrane. It localises to the mitochondrion membrane. It catalyses the reaction a 1,2-diacyl-sn-glycero-3-phosphocholine(in) = a 1,2-diacyl-sn-glycero-3-phosphocholine(out). The catalysed reaction is a 1,2-diacyl-sn-glycero-3-phospho-L-serine(in) = a 1,2-diacyl-sn-glycero-3-phospho-L-serine(out). It carries out the reaction a 1,2-diacyl-sn-glycero-3-phosphoethanolamine(in) = a 1,2-diacyl-sn-glycero-3-phosphoethanolamine(out). Functionally, phospholipid scramblase involved in autophagy by mediating autophagosomal membrane expansion. Cycles between the preautophagosomal structure/phagophore assembly site (PAS) and the cytoplasmic vesicle pool and supplies membrane for the growing autophagosome. Lipid scramblase activity plays a key role in preautophagosomal structure/phagophore assembly by distributing the phospholipids that arrive through ATG2 (ATG2A or ATG2B) from the cytoplasmic to the luminal leaflet of the bilayer, thereby driving autophagosomal membrane expansion. Also required to supply phosphatidylinositol 4-phosphate to the autophagosome initiation site by recruiting the phosphatidylinositol 4-kinase beta (PI4KB) in a process dependent on ARFIP2, but not ARFIP1. In addition to autophagy, also plays a role in necrotic cell death. This is Autophagy-related protein 9A from Homo sapiens (Human).